Consider the following 249-residue polypeptide: Probable phosphatase Spea_1436 (249 aa).

Positions 8, 10, 16, 41, 74, 102, 132, 193, and 195 each coordinate Zn(2+).

The protein belongs to the PHP family. The cofactor is Zn(2+).

This chain is Probable phosphatase Spea_1436, found in Shewanella pealeana (strain ATCC 700345 / ANG-SQ1).